The sequence spans 231 residues: Demethylmenaquinone methyltransferase (231 aa).

Residues threonine 62, aspartate 80, 100-101, and serine 117 contribute to the S-adenosyl-L-methionine site; that span reads DA.

This sequence belongs to the class I-like SAM-binding methyltransferase superfamily. MenG/UbiE family.

It catalyses the reaction a 2-demethylmenaquinol + S-adenosyl-L-methionine = a menaquinol + S-adenosyl-L-homocysteine + H(+). It participates in quinol/quinone metabolism; menaquinone biosynthesis; menaquinol from 1,4-dihydroxy-2-naphthoate: step 2/2. Functionally, methyltransferase required for the conversion of demethylmenaquinol (DMKH2) to menaquinol (MKH2). The chain is Demethylmenaquinone methyltransferase from Mycobacterium marinum (strain ATCC BAA-535 / M).